The primary structure comprises 213 residues: Redox-sensing transcriptional repressor Rex (213 aa).

The H-T-H motif DNA-binding region spans 18-57 (LYYRIFKRFHAEKIERANSKQIAEAIGIDSATVRRDFSYF). An NAD(+)-binding site is contributed by 92–97 (GIGNMG).

This sequence belongs to the transcriptional regulatory Rex family. In terms of assembly, homodimer.

The protein localises to the cytoplasm. Modulates transcription in response to changes in cellular NADH/NAD(+) redox state. Binds to the promoter of the aldehyde-alcohol dehydrogenase adhE gene. Functions as a redox-dependent repressor of adhE expression. The sequence is that of Redox-sensing transcriptional repressor Rex from Streptococcus pneumoniae serotype 19F (strain G54).